Here is a 257-residue protein sequence, read N- to C-terminus: NAD kinase (257 aa).

Asp46 (proton acceptor) is an active-site residue. NAD(+) is bound by residues 46–47, His51, 116–117, Asp146, Ala154, 157–162, and Gln218; these read DG, NE, and TAYNLS.

It belongs to the NAD kinase family. A divalent metal cation serves as cofactor.

The protein resides in the cytoplasm. The catalysed reaction is NAD(+) + ATP = ADP + NADP(+) + H(+). Its function is as follows. Involved in the regulation of the intracellular balance of NAD and NADP, and is a key enzyme in the biosynthesis of NADP. Catalyzes specifically the phosphorylation on 2'-hydroxyl of the adenosine moiety of NAD to yield NADP. This Rhizobium meliloti (strain 1021) (Ensifer meliloti) protein is NAD kinase.